Here is an 837-residue protein sequence, read N- to C-terminus: MTSPKLDRRQMLKLEAAAIAAAAAGLPVPALAANLATEREVSELKWDKAACRFCGTGCSVMVATKENRVVATHGDIKAEVNRGLNCVKGYFLSKIMYGHDRLTQPMLRKANGKYDKNGDFTPVSWTEAFDIMEVKWKEAMKKRGPNGVAMFGSGQWTIWEGYAASKLFKAGFRTNNIDPNARHCMASAVAGMMRTFGIDEPPGCYDDIEATDAFVLWGSNMAEMHPILWTRLTDRRLSAPHVRVAVLSTFEHRSFDLADIGMVFKPQTDLYLLNAIANHIIKTGRVNKDFVAAHTVFRRGQTDIGYGLRPEHPLQKKATGAAKANDSTDMSYDEYVKFVSEYTLEKAAEMSGVPLNRLEALAELYADPKTKVVSFWTMGFNQHTRGVWCNNLVYNIHLLTGKISSPGNSPFSLTGQPSACGTAREVGTFSHRLPADMVVTNKEHRTKAEHIWQLPEGTIPDKPGAHAVLQSRMLKDGLINAYWVQVNNNLQAGPNANEETYPGFRNPDNFIVVSDAYPSVTALAADLILPTAMWVEKEGAYGNAERRTQFWHQLVPAPGESKSDLWQLMEFSKRFKIEEVWPEELIAKKPEVRGKTLFDVLYKNGQVDKFPVSDIEQGYLNDESKAFGFYVHKGLFEEYASFGRGHGHDLAPFDAYHKERGLRWPVVNGQETRWRFREGSDPYVKQGTDVQFYGYPDGKARIFALPYEPAAESPDGEYPFWLSTGRVLEHWHSGTMTRRVPELYKAFPEAVCFMHPDDAQEAKIRRGDEVKVVSRRGFIRVRVETRGRDRPPRGLVFVPWFDESKLINKVTLDATDPISLQTDFKKCAVRIERVNVS.

The tat-type signal signal peptide spans 1-32; sequence MTSPKLDRRQMLKLEAAAIAAAAAGLPVPALA. One can recognise a 4Fe-4S Mo/W bis-MGD-type domain in the interval 44 to 100; that stretch reads LKWDKAACRFCGTGCSVMVATKENRVVATHGDIKAEVNRGLNCVKGYFLSKIMYGHD. [4Fe-4S] cluster is bound by residues cysteine 51, cysteine 54, cysteine 58, and cysteine 86. Mo-bis(molybdopterin guanine dinucleotide) is bound by residues lysine 88, glutamine 155, asparagine 180, cysteine 184, 217-224, 248-252, 267-269, methionine 378, glutamine 382, asparagine 488, 514-515, lysine 537, aspartate 564, and 724-733; these read WGSNMAEM, STFEH, QTD, SD, and TGRVLEHWHS. Residue tryptophan 800 coordinates substrate. Mo-bis(molybdopterin guanine dinucleotide) contacts are provided by asparagine 808 and lysine 825.

This sequence belongs to the prokaryotic molybdopterin-containing oxidoreductase family. NasA/NapA/NarB subfamily. Component of the periplasmic nitrate reductase NapAB complex composed of NapA and NapB. Requires [4Fe-4S] cluster as cofactor. Mo-bis(molybdopterin guanine dinucleotide) serves as cofactor. Post-translationally, predicted to be exported by the Tat system. The position of the signal peptide cleavage has not been experimentally proven.

The protein resides in the periplasm. The catalysed reaction is 2 Fe(II)-[cytochrome] + nitrate + 2 H(+) = 2 Fe(III)-[cytochrome] + nitrite + H2O. Functionally, catalytic subunit of the periplasmic nitrate reductase complex NapAB. Receives electrons from NapB and catalyzes the reduction of nitrate to nitrite. This is Periplasmic nitrate reductase from Bradyrhizobium diazoefficiens (strain JCM 10833 / BCRC 13528 / IAM 13628 / NBRC 14792 / USDA 110).